The primary structure comprises 299 residues: Oxaloacetate decarboxylase (299 aa).

Ser57 provides a ligand contact to substrate. Position 95 (Asp95) interacts with Mg(2+). Residues Arg167 and His243 each contribute to the substrate site.

It belongs to the isocitrate lyase/PEP mutase superfamily. Oxaloacetate decarboxylase family. Homotetramer; dimer of dimers. Requires Mg(2+) as cofactor.

The enzyme catalyses oxaloacetate + H(+) = pyruvate + CO2. Catalyzes the decarboxylation of oxaloacetate into pyruvate. Seems to play a role in maintaining cellular concentrations of bicarbonate and pyruvate. In Paraburkholderia xenovorans (strain LB400), this protein is Oxaloacetate decarboxylase.